The following is a 258-amino-acid chain: GPI alpha-1,4-mannosyltransferase I, stabilizing subunit (258 aa).

Residues 1-21 form the signal peptide; that stretch reads MAARVAAVRAAAWLLLGAATG. Over 22–230 the chain is Lumenal; sequence LTRGPAAAFT…PVGLTVHTSL (209 aa). N103 is a glycosylation site (N-linked (GlcNAc...) asparagine). A helical transmembrane segment spans residues 231 to 251; it reads VCSVTLLITILCSTLILVAVF. Residues 252–258 lie on the Cytoplasmic side of the membrane; sequence KYGHFSL.

This sequence belongs to the PIGX family. Part of the glycosylphosphatidylinositol-mannosyltransferase I complex that is composed of PIGM and PIGX. Interacts with PIGM; PIGX stabilizes PIGM.

The protein resides in the endoplasmic reticulum membrane. Its pathway is glycolipid biosynthesis; glycosylphosphatidylinositol-anchor biosynthesis. Stabilizing subunit of the glycosylphosphatidylinositol-mannosyltransferase I complex which catalyzes the transfer of the first mannose, via an alpha-1,4 bond from a dolichol-phosphate-mannose (Dol-P-Man) to the glucosaminyl acyl phosphatidylinositol (GlcN-(acyl)PI) intermediate to generate alpha-D-Man-(1-&gt;4)-alpha-D-GlcN-(1-&gt;6)-(1-radyl,2-acyl-sn-glycero-3-phospho)-2-acyl-inositol and participates in the sixth step of the glycosylphosphatidylinositol-anchor biosynthesis. Probably acts by stabilizing the mannosyltransferase PIGM. This is GPI alpha-1,4-mannosyltransferase I, stabilizing subunit from Homo sapiens (Human).